The following is a 405-amino-acid chain: Tryptophan synthase beta chain (405 aa).

Lysine 98 carries the N6-(pyridoxal phosphate)lysine modification.

Belongs to the TrpB family. As to quaternary structure, tetramer of two alpha and two beta chains. It depends on pyridoxal 5'-phosphate as a cofactor.

The enzyme catalyses (1S,2R)-1-C-(indol-3-yl)glycerol 3-phosphate + L-serine = D-glyceraldehyde 3-phosphate + L-tryptophan + H2O. It functions in the pathway amino-acid biosynthesis; L-tryptophan biosynthesis; L-tryptophan from chorismate: step 5/5. The beta subunit is responsible for the synthesis of L-tryptophan from indole and L-serine. The chain is Tryptophan synthase beta chain from Xanthomonas oryzae pv. oryzae (strain PXO99A).